A 369-amino-acid polypeptide reads, in one-letter code: Putative agmatine deiminase (369 aa).

Catalysis depends on cysteine 361, which acts as the Amidino-cysteine intermediate.

The protein belongs to the agmatine deiminase family.

The catalysed reaction is agmatine + H2O = N-carbamoylputrescine + NH4(+). This Streptococcus mutans serotype c (strain ATCC 700610 / UA159) protein is Putative agmatine deiminase.